A 278-amino-acid chain; its full sequence is Checkpoint protein Hus1-like (278 aa).

Belongs to the HUS1 family. As to quaternary structure, component of the 9-1-1 checkpoint clamp complex consisting of Rad9 isoform A, Rad1 and Hus1-like; the interactions with Rad1 and Rad9 are direct. This complex probably also forms with Rad9 isoform B, however 9-1-1 complex containing Rad9 isoform A localizes to the nuclear periphery. As to expression, expressed in ovary.

It localises to the cytoplasm. It is found in the nucleus envelope. Functionally, component of the 9-1-1 checkpoint clamp complex. Involved in both meiotic and somatic DNA damage responses. Essential for activation of the meiotic checkpoint in response to double-strand DNA breaks; required for the S-phase checkpoint but not the G2-M phase checkpoint. Involved in double strand break repair by homologous recombination during meiosis; influences the organization of chromosomal DNA in the meiotic nucleus. The protein is Checkpoint protein Hus1-like of Drosophila melanogaster (Fruit fly).